The sequence spans 214 residues: Rac-like GTP-binding protein 2 (214 aa).

14–21 (GDGAVGKT) is a binding site for GTP. The Effector region signature appears at 36–44 (YIPTVFDNF). GTP contacts are provided by residues 61–65 (DTAGQ) and 119–122 (TKLD).

This sequence belongs to the small GTPase superfamily. Rho family. Post-translationally, may be palmitoylated.

It localises to the cytoplasm. The protein resides in the membrane. Its function is as follows. Inactive GDP-bound Rho GTPases reside in the cytosol, are found in a complex with Rho GDP-dissociation inhibitors (Rho GDIs), and are released from the GDI protein in order to translocate to membranes upon activation. The sequence is that of Rac-like GTP-binding protein 2 (RAC2) from Oryza sativa subsp. japonica (Rice).